Reading from the N-terminus, the 247-residue chain is Ribonuclease PH (247 aa).

Residues Arg-87 and 125–127 (GTR) contribute to the phosphate site.

This sequence belongs to the RNase PH family. As to quaternary structure, homohexameric ring arranged as a trimer of dimers.

It carries out the reaction tRNA(n+1) + phosphate = tRNA(n) + a ribonucleoside 5'-diphosphate. Phosphorolytic 3'-5' exoribonuclease that plays an important role in tRNA 3'-end maturation. Removes nucleotide residues following the 3'-CCA terminus of tRNAs; can also add nucleotides to the ends of RNA molecules by using nucleoside diphosphates as substrates, but this may not be physiologically important. Probably plays a role in initiation of 16S rRNA degradation (leading to ribosome degradation) during starvation. The polypeptide is Ribonuclease PH (Nostoc sp. (strain PCC 7120 / SAG 25.82 / UTEX 2576)).